A 404-amino-acid chain; its full sequence is Chorismate synthase (404 aa).

Positions 40 and 46 each coordinate NADP(+). FMN contacts are provided by residues 135 to 137, 256 to 257, Gly300, 315 to 319, and Arg341; these read RAS, QA, and KPIST.

Belongs to the chorismate synthase family. In terms of assembly, homotetramer. FMNH2 is required as a cofactor.

The catalysed reaction is 5-O-(1-carboxyvinyl)-3-phosphoshikimate = chorismate + phosphate. The protein operates within metabolic intermediate biosynthesis; chorismate biosynthesis; chorismate from D-erythrose 4-phosphate and phosphoenolpyruvate: step 7/7. In terms of biological role, catalyzes the anti-1,4-elimination of the C-3 phosphate and the C-6 proR hydrogen from 5-enolpyruvylshikimate-3-phosphate (EPSP) to yield chorismate, which is the branch point compound that serves as the starting substrate for the three terminal pathways of aromatic amino acid biosynthesis. This reaction introduces a second double bond into the aromatic ring system. In Mycobacterium sp. (strain JLS), this protein is Chorismate synthase.